Here is a 174-residue protein sequence, read N- to C-terminus: Peptide deformylase (174 aa).

Fe cation contacts are provided by Cys94 and His136. Glu137 is an active-site residue. His140 serves as a coordination point for Fe cation.

It belongs to the polypeptide deformylase family. Fe(2+) serves as cofactor.

It carries out the reaction N-terminal N-formyl-L-methionyl-[peptide] + H2O = N-terminal L-methionyl-[peptide] + formate. Functionally, removes the formyl group from the N-terminal Met of newly synthesized proteins. Requires at least a dipeptide for an efficient rate of reaction. N-terminal L-methionine is a prerequisite for activity but the enzyme has broad specificity at other positions. In Maricaulis maris (strain MCS10) (Caulobacter maris), this protein is Peptide deformylase.